The following is a 251-amino-acid chain: Triosephosphate isomerase (251 aa).

Substrate is bound at residue 9 to 11; that stretch reads NWK. His-95 (electrophile) is an active-site residue. Glu-167 serves as the catalytic Proton acceptor. Residues Gly-173, Ser-212, and 233-234 each bind substrate; that span reads GG.

This sequence belongs to the triosephosphate isomerase family. In terms of assembly, homodimer.

It localises to the cytoplasm. The enzyme catalyses D-glyceraldehyde 3-phosphate = dihydroxyacetone phosphate. Its pathway is carbohydrate biosynthesis; gluconeogenesis. The protein operates within carbohydrate degradation; glycolysis; D-glyceraldehyde 3-phosphate from glycerone phosphate: step 1/1. Involved in the gluconeogenesis. Catalyzes stereospecifically the conversion of dihydroxyacetone phosphate (DHAP) to D-glyceraldehyde-3-phosphate (G3P). In Pseudomonas fluorescens (strain ATCC BAA-477 / NRRL B-23932 / Pf-5), this protein is Triosephosphate isomerase.